A 608-amino-acid chain; its full sequence is MSDKNSRIAIVSADKCKPKKCRQECKRSCPVVKTGKLCIEVTPTSKIAFISEILCIGCGICVKKCPFDAIQIINLPTNLEAHVTHRYSANSFKLHRLPTPRPGQVLGLVGTNGIGKSTALKILAGKQKPNLGRFDDPPEWQEIIKYFRGSELQNYFTKMLEDDIKAIIKPQYVDNIPRAIKGPVQKVGELLKLRMEKSPEDVKRYIKILQLENVLKRDIEKLSGGELQRFAIGMSCVQEADVYMFDEPSSYLDVKQRLNAAQIIRSLLAPTKYVICVEHDLSVLDYLSDFVCIIYGVPSVYGVVTLPASVREGINIFLDGHIPAENLRFRTEALQFRIADATEDLQNDSASRAFSYPSLKKTQGDFVLNVEEGEFSDSEILVMMGENGTGKTTLIKLLAGALKPDEGQDIPKLNVSMKPQKIAPKFPGTVRQLFFKKIRGQFLNPQFQTDVVKPLRIDDIIDQEVQHLSGGELQRVAIVLALGIPADIYLIDEPSAYLDSEQRIICSKVIRRFILHNKKTAFIVEHDFIMATYLADKVIVFEGIPSKNAHARAPESLLTGCNRFLKNLNVTFRRDPNSFRPRINKLDSQMDKEQKSSGNYFFLDNTGI.

4Fe-4S ferredoxin-type domains follow at residues 7–39 and 46–75; these read RIAI…KLCI and KIAF…IINL. ABC transporter domains lie at 70–320 and 345–568; these read IQII…FLDG and LQND…LKNL. 110-117 serves as a coordination point for ATP; that stretch reads GTNGIGKS. Ser-349 carries the post-translational modification Phosphoserine. 385-392 is a binding site for ATP; that stretch reads GENGTGKT.

It belongs to the ABC transporter superfamily. ABCE family. In terms of assembly, component of the multifactor complex (MFC) composed of at least RLI1, the eIF2 subunit SUI2, TIF5/eIF5, and the eIF3 subunits PRT1, HCR1, NIP1, RPG1, TIF34 and TIF35. The complex associates with pre-initiation complexes. Interacts with the complex YAE1:LTO1; the complex bridges the interaction between the CIA complex and RLI1.

Its subcellular location is the cytoplasm. The protein localises to the nucleus. Functionally, component of the multifactor complex (MFC) involved in translation initiation. Required for the binding of MFC to the 40S ribosome. Required for the processing and nuclear export of the 60S and 40S ribosomal subunits. The sequence is that of Translation initiation factor RLI1 (RLI1) from Saccharomyces cerevisiae (strain ATCC 204508 / S288c) (Baker's yeast).